The chain runs to 112 residues: T cell receptor alpha variable 7 (112 aa).

A signal peptide spans 1–21 (MEKMRRPVLIIFCLCLGWANG). Residues 22-112 (ENQVEHSPHF…DSATYFCAVD (91 aa)) enclose the Ig-like domain. A disulfide bridge connects residues cysteine 44 and cysteine 109. N-linked (GlcNAc...) asparagine glycosylation is found at asparagine 84 and asparagine 90.

Alpha-beta TR is a heterodimer composed of an alpha and beta chain; disulfide-linked. The alpha-beta TR is associated with the transmembrane signaling CD3 coreceptor proteins to form the TR-CD3 (TcR or TCR). The assembly of alpha-beta TR heterodimers with CD3 occurs in the endoplasmic reticulum where a single alpha-beta TR heterodimer associates with one CD3D-CD3E heterodimer, one CD3G-CD3E heterodimer and one CD247 homodimer forming a stable octameric structure. CD3D-CD3E and CD3G-CD3E heterodimers preferentially associate with TR alpha and TR beta chains, respectively. The association of the CD247 homodimer is the last step of TcR assembly in the endoplasmic reticulum and is required for transport to the cell surface.

It localises to the cell membrane. Its function is as follows. V region of the variable domain of T cell receptor (TR) alpha chain that participates in the antigen recognition. Alpha-beta T cell receptors are antigen specific receptors which are essential to the immune response and are present on the cell surface of T lymphocytes. Recognize peptide-major histocompatibility (MH) (pMH) complexes that are displayed by antigen presenting cells (APC), a prerequisite for efficient T cell adaptive immunity against pathogens. Binding of alpha-beta TR to pMH complex initiates TR-CD3 clustering on the cell surface and intracellular activation of LCK that phosphorylates the ITAM motifs of CD3G, CD3D, CD3E and CD247 enabling the recruitment of ZAP70. In turn ZAP70 phosphorylates LAT, which recruits numerous signaling molecules to form the LAT signalosome. The LAT signalosome propagates signal branching to three major signaling pathways, the calcium, the mitogen-activated protein kinase (MAPK) kinase and the nuclear factor NF-kappa-B (NF-kB) pathways, leading to the mobilization of transcription factors that are critical for gene expression and essential for T cell growth and differentiation. The T cell repertoire is generated in the thymus, by V-(D)-J rearrangement. This repertoire is then shaped by intrathymic selection events to generate a peripheral T cell pool of self-MH restricted, non-autoaggressive T cells. Post-thymic interaction of alpha-beta TR with the pMH complexes shapes TR structural and functional avidity. This is T cell receptor alpha variable 7 from Homo sapiens (Human).